The primary structure comprises 91 residues: MSKVAVLLRVLPDDAETKPEELYKKIAAALPEKYQVAQYQAEPIAFGLEALRMVILMPEETEGGTEELETIIQSVQGVSQVDVLNVTRFSG.

This sequence belongs to the EF-1-beta/EF-1-delta family.

Its function is as follows. Promotes the exchange of GDP for GTP in EF-1-alpha/GDP, thus allowing the regeneration of EF-1-alpha/GTP that could then be used to form the ternary complex EF-1-alpha/GTP/AAtRNA. The sequence is that of Elongation factor 1-beta from Thermofilum pendens (strain DSM 2475 / Hrk 5).